The chain runs to 435 residues: ATP-dependent protease ATPase subunit HslU (435 aa).

ATP-binding positions include V18, 60 to 65, D248, E313, and R385; that span reads GVGKTE.

The protein belongs to the ClpX chaperone family. HslU subfamily. A double ring-shaped homohexamer of HslV is capped on each side by a ring-shaped HslU homohexamer. The assembly of the HslU/HslV complex is dependent on binding of ATP.

Its subcellular location is the cytoplasm. Its function is as follows. ATPase subunit of a proteasome-like degradation complex; this subunit has chaperone activity. The binding of ATP and its subsequent hydrolysis by HslU are essential for unfolding of protein substrates subsequently hydrolyzed by HslV. HslU recognizes the N-terminal part of its protein substrates and unfolds these before they are guided to HslV for hydrolysis. In Xanthobacter autotrophicus (strain ATCC BAA-1158 / Py2), this protein is ATP-dependent protease ATPase subunit HslU.